A 442-amino-acid polypeptide reads, in one-letter code: Zinc finger protein sfp1 (442 aa).

Positions 193-208 are enriched in low complexity; that stretch reads AASSDMSSDEASSQAE. Disordered regions lie at residues 193–219 and 304–333; these read AASSDMSSDEASSQAETTGTPKKMPES and SPFVRKSSSDLEAKPSKKQRSTPAFSHDSP. C2H2-type zinc fingers lie at residues 350–375 and 399–422; these read YKCPVPNCDKAYKNQNGLKYHKLHGH and YRCEVCSKRYKNLNGLKYHRTHSH.

The protein resides in the cytoplasm. It localises to the nucleus. The chain is Zinc finger protein sfp1 (sfp1) from Schizosaccharomyces pombe (strain 972 / ATCC 24843) (Fission yeast).